The following is a 694-amino-acid chain: Elongation factor G (694 aa).

The tr-type G domain occupies 6–288; sequence KLYRNIGIAA…GVIEYLPSPT (283 aa). GTP-binding positions include 15-22, 86-90, and 140-143; these read AHVDAGKT, DTPGH, and NKMD.

The protein belongs to the TRAFAC class translation factor GTPase superfamily. Classic translation factor GTPase family. EF-G/EF-2 subfamily.

The protein localises to the cytoplasm. In terms of biological role, catalyzes the GTP-dependent ribosomal translocation step during translation elongation. During this step, the ribosome changes from the pre-translocational (PRE) to the post-translocational (POST) state as the newly formed A-site-bound peptidyl-tRNA and P-site-bound deacylated tRNA move to the P and E sites, respectively. Catalyzes the coordinated movement of the two tRNA molecules, the mRNA and conformational changes in the ribosome. In Legionella pneumophila subsp. pneumophila (strain Philadelphia 1 / ATCC 33152 / DSM 7513), this protein is Elongation factor G.